A 221-amino-acid polypeptide reads, in one-letter code: Putative adhesin P1-like protein MPN_131 (221 aa).

Low complexity predominate over residues Arg-13 to Asn-36. 2 disordered regions span residues Arg-13–Val-51 and Gly-90–Gly-183. Residues Ala-37–Asn-48 are compositionally biased toward polar residues. Positions Leu-130 to Gly-139 are enriched in basic and acidic residues. Composition is skewed to polar residues over residues Ser-149–Pro-160 and His-174–Gly-183.

The protein belongs to the adhesin P1 family.

The sequence is that of Putative adhesin P1-like protein MPN_131 from Mycoplasma pneumoniae (strain ATCC 29342 / M129 / Subtype 1) (Mycoplasmoides pneumoniae).